Here is a 280-residue protein sequence, read N- to C-terminus: MKQMGSMHPVQVIAVTGGKGGVGKTNVSVNLALALADLGRRVMLLDADLGLANVDVLLGLTPKRTLADVIEGRCELRDVLLLGPGGVRIVPAASGTQSMVHLSPMQHAGLIQAFSDISDNLDVLVVDTAAGIGDSVVSFVRAAQEVLLVVCDEPTSITDAYALIKLLNRDHGMTRFRVLANMAHSPQEGRNLFAKLTKVTDRFLDVALQYVGVIPYDESVRKAVQKQRAVYEAFPRSKASLAFKAVAQKVDSWPLPANPRGHLEFFVERLVQHPATGSAV.

ATP contacts are provided by residues 19 to 26 (KGGVGKTN), E153, N181, 215 to 217 (PYD), and R221.

The protein belongs to the ParA family. As to quaternary structure, forms homodimers. Interacts with FleQ.

With respect to regulation, ATP-binding allows dimerization and subsequent antagonistic effect against FleQ. Functionally, ATPase that plays an important role in maintaining flagellar number in Pseudomonas aeruginosa. Exhibits anti-activator activity against FleQ, the global transcriptional regulator of flagellar genes. The sequence is that of Antiactivator FleN from Pseudomonas aeruginosa (strain ATCC 15692 / DSM 22644 / CIP 104116 / JCM 14847 / LMG 12228 / 1C / PRS 101 / PAO1).